Here is a 419-residue protein sequence, read N- to C-terminus: UDP-N-acetylglucosamine 1-carboxyvinyltransferase 2 (419 aa).

24 to 25 (KN) is a binding site for phosphoenolpyruvate. Arg94 lines the UDP-N-acetyl-alpha-D-glucosamine pocket. Cys118 acts as the Proton donor in catalysis. 2-(S-cysteinyl)pyruvic acid O-phosphothioketal is present on Cys118. UDP-N-acetyl-alpha-D-glucosamine is bound by residues 123 to 127 (RPIDQ), Asp307, and Ile329.

The protein belongs to the EPSP synthase family. MurA subfamily.

The protein localises to the cytoplasm. It catalyses the reaction phosphoenolpyruvate + UDP-N-acetyl-alpha-D-glucosamine = UDP-N-acetyl-3-O-(1-carboxyvinyl)-alpha-D-glucosamine + phosphate. The protein operates within cell wall biogenesis; peptidoglycan biosynthesis. Functionally, cell wall formation. Adds enolpyruvyl to UDP-N-acetylglucosamine. This Staphylococcus epidermidis (strain ATCC 12228 / FDA PCI 1200) protein is UDP-N-acetylglucosamine 1-carboxyvinyltransferase 2.